Consider the following 1379-residue polypeptide: DNA-directed RNA polymerase subunit beta'' (1379 aa).

Positions 220, 293, 300, and 303 each coordinate Zn(2+).

It belongs to the RNA polymerase beta' chain family. RpoC2 subfamily. In plastids the minimal PEP RNA polymerase catalytic core is composed of four subunits: alpha, beta, beta', and beta''. When a (nuclear-encoded) sigma factor is associated with the core the holoenzyme is formed, which can initiate transcription. It depends on Zn(2+) as a cofactor.

It localises to the plastid. Its subcellular location is the chloroplast. It catalyses the reaction RNA(n) + a ribonucleoside 5'-triphosphate = RNA(n+1) + diphosphate. In terms of biological role, DNA-dependent RNA polymerase catalyzes the transcription of DNA into RNA using the four ribonucleoside triphosphates as substrates. This chain is DNA-directed RNA polymerase subunit beta'', found in Nasturtium officinale (Watercress).